A 106-amino-acid chain; its full sequence is Nucleoid-associated protein Abu_0429 (106 aa).

The protein belongs to the YbaB/EbfC family. Homodimer.

Its subcellular location is the cytoplasm. It localises to the nucleoid. Functionally, binds to DNA and alters its conformation. May be involved in regulation of gene expression, nucleoid organization and DNA protection. This is Nucleoid-associated protein Abu_0429 from Aliarcobacter butzleri (strain RM4018) (Arcobacter butzleri).